A 240-amino-acid chain; its full sequence is Thiopurine S-methyltransferase (240 aa).

24–35 is a binding site for S-adenosyl-L-methionine; that stretch reads WQDKWVTRHIAF. Phenylalanine 35 is a substrate binding site. N6-acetyllysine is present on lysine 53. Residues leucine 64, glutamate 85, 129 to 130, and arginine 147 contribute to the S-adenosyl-L-methionine site; that span reads SI.

Belongs to the class I-like SAM-binding methyltransferase superfamily. TPMT family. In terms of assembly, monomer.

The protein localises to the cytoplasm. It catalyses the reaction S-adenosyl-L-methionine + a thiopurine = S-adenosyl-L-homocysteine + a thiopurine S-methylether.. It carries out the reaction mercaptopurine + S-adenosyl-L-methionine = 6-methylthiopurine + S-adenosyl-L-homocysteine + H(+). Functionally, catalyzes the S-methylation of thiopurine drugs such as 6-mercaptopurine (also called mercaptopurine, 6-MP or its brand name Purinethol) using S-adenosyl-L-methionine as the methyl donor. TPMT activity modulates the cytotoxic effects of thiopurine prodrugs. A natural substrate for this enzyme has yet to be identified. The protein is Thiopurine S-methyltransferase (Tpmt) of Rattus norvegicus (Rat).